The sequence spans 238 residues: Lipid transferase CIDEC (238 aa).

Residues 1 to 35 (MEYAMKSLSLLYPKSLSRHVSVRTSVVTQQLLSEP) form a required for liquid-liquid phase separation (LLPS) region. Positions 41-118 (RARPCRVSTA…VLQKGQKWQP (78 aa)) constitute a CIDE-N domain.

It belongs to the CIDE family. Homodimer. Homooligomer; undergoes liquid-liquid phase separation (LLPS) via its N-terminus, facilitating lipid droplet fusion, occurs at the lipid droplet contact sites. Interacts with CIDEA. Interacts with PLIN1. Interacts with NFAT5; this interaction is direct and retains NFAT5 in the cytoplasm. Interacts with CEBPB. Interacts with isoform CLSTN3beta of CLSTN3; inhibiting the lipid transferase activity of CIDEC. Ubiquitinated and targeted to proteasomal degradation, resulting in a short half-life (about 15 minutes in 3T3-L1 cells). Protein stability depends on triaclyglycerol synthesis, fatty acid availability and lipid droplet formation. In terms of tissue distribution, expressed mainly in adipose tissue, small intestine, heart, colon and stomach and, at lower levels, in brain, kidney and liver.

It is found in the lipid droplet. The protein resides in the endoplasmic reticulum. The protein localises to the nucleus. It catalyses the reaction a triacyl-sn-glycerol(in) = a triacyl-sn-glycerol(out). Its function is as follows. Lipid transferase specifically expressed in white adipose tissue, which promotes unilocular lipid droplet formation by mediating lipid droplet fusion. Lipid droplet fusion promotes their enlargement, restricting lipolysis and favoring lipid storage. Localizes on the lipid droplet surface, at focal contact sites between lipid droplets, and mediates atypical lipid droplet fusion by undergoing liquid-liquid phase separation (LLPS) and promoting directional net neutral lipid transfer from the smaller to larger lipid droplets. The transfer direction may be driven by the internal pressure difference between the contacting lipid droplet pair. Its role in neutral lipid transfer and lipid droplet enlargement is activated by the interaction with PLIN1. May also act as a CEBPB coactivator in the white adipose tissue to control the expression of a subset of CEBPB downstream target genes, including SOCS1, SOCS3, TGFB1, TGFBR1, ID2 and XDH. When overexpressed in preadipocytes, induces apoptosis or increases cell susceptibility to apoptosis induced by serum deprivation or TGFB treatment. In Homo sapiens (Human), this protein is Lipid transferase CIDEC.